A 340-amino-acid polypeptide reads, in one-letter code: GTP 3',8-cyclase (340 aa).

The Radical SAM core domain occupies 20–246; sequence RFERQYVYLR…PKALSDGPAK (227 aa). Residue arginine 29 coordinates GTP. 2 residues coordinate [4Fe-4S] cluster: cysteine 36 and cysteine 40. Position 42 (tyrosine 42) interacts with S-adenosyl-L-methionine. Residue cysteine 43 coordinates [4Fe-4S] cluster. Arginine 79 is a GTP binding site. Glycine 83 serves as a coordination point for S-adenosyl-L-methionine. Threonine 110 contributes to the GTP binding site. Serine 134 is a binding site for S-adenosyl-L-methionine. Position 171 (lysine 171) interacts with GTP. Methionine 205 contacts S-adenosyl-L-methionine. [4Fe-4S] cluster-binding residues include cysteine 268 and cysteine 271. 273–275 contributes to the GTP binding site; sequence RLR. [4Fe-4S] cluster is bound at residue cysteine 285.

It belongs to the radical SAM superfamily. MoaA family. In terms of assembly, monomer and homodimer. The cofactor is [4Fe-4S] cluster.

The enzyme catalyses GTP + AH2 + S-adenosyl-L-methionine = (8S)-3',8-cyclo-7,8-dihydroguanosine 5'-triphosphate + 5'-deoxyadenosine + L-methionine + A + H(+). The protein operates within cofactor biosynthesis; molybdopterin biosynthesis. Catalyzes the cyclization of GTP to (8S)-3',8-cyclo-7,8-dihydroguanosine 5'-triphosphate. The protein is GTP 3',8-cyclase of Actinobacillus pleuropneumoniae serotype 5b (strain L20).